A 168-amino-acid chain; its full sequence is MTCYRLAKRRDLFAFPYPIAIWRDPPKSVEIVRNLVADGGFKHIYTVGDVVTRNFLEYGLIPTSAAVDEKTRRGIRVERFSAFRSVVEVVNPPGYITDEAWSAVEKAVEGGVVVKVRGEEDMLSLAFIRLAPPRSIVAYGHYMGALIAIPVDWYRRDLLKLFDFLEKC.

GTP is bound by residues aspartate 49, valine 50, valine 51, aspartate 68, lysine 70, and glutamate 120.

It belongs to the GTP-dependent DPCK family.

The catalysed reaction is 3'-dephospho-CoA + GTP = GDP + CoA + H(+). It participates in cofactor biosynthesis; coenzyme A biosynthesis. Functionally, catalyzes the GTP-dependent phosphorylation of the 3'-hydroxyl group of dephosphocoenzyme A to form coenzyme A (CoA). In Pyrobaculum calidifontis (strain DSM 21063 / JCM 11548 / VA1), this protein is GTP-dependent dephospho-CoA kinase.